The chain runs to 377 residues: Circumsporozoite protein (377 aa).

Positions 1–22 (MKNFILLAVSSILLVDLFPTHC) are cleaved as a signal peptide. The interval 51-294 (HVGQSASRGR…NNEGANAPNE (244 aa)) is disordered. A compositionally biased stretch (basic and acidic residues) spans 72 to 100 (DAKKKKDGKKAEPKNPRENKLKQPGDRAD). Residues 80–88 (KKAEPKNPR) are required for the binding to heparan sulfate proteoglycans (HSPGs) on the surface of host hepatocytes. The interval 91-95 (KLKQP) is region I; contains the proteolytic cleavage site. Repeat copies occupy residues 95-103 (PGDRADGQP), 104-112 (AGDRADGQP), 113-121 (AGDRADGQP), 122-130 (AGDRADGQP), 131-139 (AGDRAAGQP), 140-148 (AGDRADGQP), 149-157 (AGDRADGQP), 158-166 (AGDRADGQP), 167-175 (AGDRADGQP), 176-184 (AGDRAAGQP), 185-193 (AGDRAAGQP), 194-202 (AGDRADGQP), 203-211 (AGDRAAGQP), 212-220 (AGDRADGQP), 221-229 (AGDRAAGQP), 230-238 (AGDRADGQP), 239-247 (AGDRAAGQP), 248-256 (AGDRAAGQP), 257-265 (AGDRAAGQA), and 266-274 (AGDRAAGQA). The tract at residues 95–274 (PGDRADGQPA…AAGDRAAGQA (180 aa)) is 20 X 9 AA tandem repeats of [PA]-G-D-R-A-[DA]-G-Q-[PA]. The span at 236 to 273 (GQPAGDRAAGQPAGDRAAGQPAGDRAAGQAAGDRAAGQ) shows a compositional bias: low complexity. Residues 274 to 283 (AAGGNAGGQG) show a composition bias toward gly residues. Residues 284–293 (QNNEGANAPN) show a composition bias toward low complexity. Positions 303 to 355 (KVRATVGTEWTPCSVTCGVGVRVRRRVNAANKKPEDLTLNDLETDVCTMDKCA) constitute a TSP type-1 domain. Intrachain disulfides connect cysteine 315–cysteine 349 and cysteine 319–cysteine 354. Threonine 318 is a glycosylation site (O-linked (Fuc) threonine). Residue cysteine 354 is the site of GPI-anchor amidated cysteine attachment. The propeptide at 355-377 (AGIFNVVSNSLGLVILLVLALFN) is removed in mature form.

The protein belongs to the plasmodium circumsporozoite protein family. In terms of processing, during host cell invasion, proteolytically cleaved at the cell membrane in the region I by a papain-like cysteine protease of parasite origin. Cleavage is triggered by the sporozoite contact with highly sulfated heparan sulfate proteoglycans (HSPGs) present on the host hepatocyte cell surface. Cleavage exposes the TSP type-1 (TSR) domain and is required for productive invasion of host hepatocytes but not for adhesion to the host cell membrane. Cleavage is dispensable for sporozoite development in the oocyst, motility and for traversal of host and vector cells. Post-translationally, O-glycosylated; maybe by POFUT2.

It localises to the cell membrane. The protein localises to the cytoplasm. Essential sporozoite protein. In the mosquito vector, required for sporozoite development in the oocyst, migration through the vector hemolymph and entry into the vector salivary glands. In the vertebrate host, required for sporozoite migration through the host dermis and infection of host hepatocytes. Binds to highly sulfated heparan sulfate proteoglycans (HSPGs) on the surface of host hepatocytes. Functionally, in the vertebrate host, binds to highly sulfated heparan sulfate proteoglycans (HSPGs) on the surface of host hepatocytes and is required for sporozoite invasion of the host hepatocytes. This Plasmodium vivax (strain Salvador I) protein is Circumsporozoite protein.